Here is a 179-residue protein sequence, read N- to C-terminus: Ubiquitin-conjugating enzyme E2 C (179 aa).

Residues 1–14 are compositionally biased toward polar residues; the sequence is MASQNRDPAATSVT. The interval 1–31 is disordered; sequence MASQNRDPAATSVTAARKGAEPSGGAARGPV. Ala-2 bears the N-acetylalanine mark. Ser-3 is subject to Phosphoserine. Residues 30–175 form the UBC core domain; it reads PVGKRLQQEL…LQETYSKQVT (146 aa). Cys-114 functions as the Glycyl thioester intermediate in the catalytic mechanism.

This sequence belongs to the ubiquitin-conjugating enzyme family. As to quaternary structure, component of the APC/C complex, composed of at least 14 distinct subunits that assemble into a complex of at least 19 chains with a combined molecular mass of around 1.2 MDa. Within this complex, directly interacts with ANAPC2. Post-translationally, autoubiquitinated by the APC/C complex, leading to its degradation by the proteasome. Its degradation plays a central role in APC/C regulation, allowing cyclin-A accumulation before S phase entry. APC/C substrates inhibit the autoubiquitination of UBE2C/UBCH10 but not its E2 function, hence APC/C remaining active until its substrates have been destroyed.

The enzyme catalyses S-ubiquitinyl-[E1 ubiquitin-activating enzyme]-L-cysteine + [E2 ubiquitin-conjugating enzyme]-L-cysteine = [E1 ubiquitin-activating enzyme]-L-cysteine + S-ubiquitinyl-[E2 ubiquitin-conjugating enzyme]-L-cysteine.. It catalyses the reaction S-ubiquitinyl-[E1 ubiquitin-activating enzyme]-L-cysteine + [acceptor protein]-L-lysine = [E1 ubiquitin-activating enzyme]-L-cysteine + N(6)-monoubiquitinyl-[acceptor protein]-L-lysine.. The protein operates within protein modification; protein ubiquitination. Accepts ubiquitin from the E1 complex and catalyzes its covalent attachment to other proteins. In vitro catalyzes 'Lys-11'- and 'Lys-48'-linked polyubiquitination. Acts as an essential factor of the anaphase promoting complex/cyclosome (APC/C), a cell cycle-regulated ubiquitin ligase that controls progression through mitosis. Acts by initiating 'Lys-11'-linked polyubiquitin chains on APC/C substrates, leading to the degradation of APC/C substrates by the proteasome and promoting mitotic exit. This chain is Ubiquitin-conjugating enzyme E2 C (UBE2C), found in Macaca fascicularis (Crab-eating macaque).